The following is a 213-amino-acid chain: StAR-related lipid transfer protein 5 (213 aa).

The START domain maps to 1–213; that stretch reads MDPALAAQMS…LQKAVKQFHE (213 aa).

Its function is as follows. May be involved in the intracellular transport of sterols or other lipids. May bind cholesterol or other sterols. In Pongo abelii (Sumatran orangutan), this protein is StAR-related lipid transfer protein 5 (STARD5).